Consider the following 213-residue polypeptide: Amelotin (213 aa).

An N-terminal signal peptide occupies residues 1–16 (MKTMILLLCLLGSAQS). Disordered regions lie at residues 22–43 (NPAS…LPQQ) and 162–213 (GAKA…NRTQ). A compositionally biased stretch (polar residues) spans 33 to 43 (TPGQVTPLPQQ). Low complexity predominate over residues 169-180 (GTTPGHVTTPGV).

It belongs to the amelotin family. Post-translationally, phosphorylated by FAM20C in vitro. O-glycosylated. As to expression, specifically expressed in maturation-stage ameloblasts.

The protein localises to the secreted. Is a promoter of calcium phosphate mineralization, playing a critical role in the formation of the compact, mineralized, aprismatic enamel surface layer during the maturation stage of amelogenesis. The chain is Amelotin (Amtn) from Mus musculus (Mouse).